Consider the following 237-residue polypeptide: Leucyl/phenylalanyl-tRNA--protein transferase (237 aa).

The protein belongs to the L/F-transferase family.

It is found in the cytoplasm. The enzyme catalyses N-terminal L-lysyl-[protein] + L-leucyl-tRNA(Leu) = N-terminal L-leucyl-L-lysyl-[protein] + tRNA(Leu) + H(+). It catalyses the reaction N-terminal L-arginyl-[protein] + L-leucyl-tRNA(Leu) = N-terminal L-leucyl-L-arginyl-[protein] + tRNA(Leu) + H(+). The catalysed reaction is L-phenylalanyl-tRNA(Phe) + an N-terminal L-alpha-aminoacyl-[protein] = an N-terminal L-phenylalanyl-L-alpha-aminoacyl-[protein] + tRNA(Phe). Functionally, functions in the N-end rule pathway of protein degradation where it conjugates Leu, Phe and, less efficiently, Met from aminoacyl-tRNAs to the N-termini of proteins containing an N-terminal arginine or lysine. The sequence is that of Leucyl/phenylalanyl-tRNA--protein transferase from Shewanella baltica (strain OS155 / ATCC BAA-1091).